Here is a 173-residue protein sequence, read N- to C-terminus: Terpene cyclase subB (173 aa).

Helical transmembrane passes span 11–31 (PGYL…GLGW), 51–71 (ALMP…IYPF), 112–132 (LPFI…ALAL), and 141–161 (AFSA…QLLS).

It belongs to the paxB family.

It localises to the membrane. Its pathway is secondary metabolite biosynthesis; terpenoid biosynthesis. Functionally, terpene cyclase; part of the gene cluster that mediates the biosynthesis of the immunosuppressants subglutinols, meroterpenoids consisting of an alpha-pyrone (4-hydroxy-5,6-dimethyl-2-pyrone) moiety attached to a decalin core fused to a five-membered cyclic ether carrying a prenylside chain. The first step of the pathway is the synthesis of the alpha-pyrone moiety by the polyketide synthase subA via condensation of one acetyl-CoA starter unit with 3 malonyl-CoA units and 2 methylations. The alpha-pyrone is then combined with geranylgeranyl pyrophosphate (GGPP) formed by the GGPP synthase subD through the action of the prenyltransferase subC to yield a linear alpha-pyrone diterpenoid. Subsequent steps in the subglutinol biosynthetic pathway involve the decalin core formation, which is thought to be initiated by the epoxidation of the C10-C11 olefin by the FAD-dependent oxidoreductase subE. The following cyclization cascade would be catalyzed by the terpene cyclase subB. Lastly, the FAD-dependent dehydrogenase subF probably catalyzes the five-membered cyclic ether formation to complete the formation of subglutinol A. Subsequent redox reactions appear to give rise to subglutinol C and D, however, it remains unclear which enzymes are responsible for these transformations. SubD may have secondary function in the conversion of the identified subglutinols to subglutinol analog 45, which seems to be the major product of the cluster. This chain is Terpene cyclase subB, found in Metarhizium robertsii (strain ARSEF 23 / ATCC MYA-3075) (Metarhizium anisopliae (strain ARSEF 23)).